The sequence spans 662 residues: Polyunsaturated fatty acid lipoxygenase ALOX15 (662 aa).

The 113-residue stretch at 2–114 folds into the PLAT domain; the sequence is GLYRIRVSTG…VLSLPEGTGR (113 aa). Residues 115–662 form the Lipoxygenase domain; sequence TVGDDPQGLF…PSIVENSVAI (548 aa). The Fe cation site is built by H360, H365, H540, H544, and I662.

The protein belongs to the lipoxygenase family. Interacts with PEBP1; in response to IL13/interleukin-13, prevents the interaction of PEBP1 with RAF1 to activate the ERK signaling cascade. Fe cation is required as a cofactor.

Its subcellular location is the cytoplasm. It localises to the cytosol. It is found in the cell membrane. The protein localises to the lipid droplet. The catalysed reaction is (5Z,8Z,11Z,14Z)-eicosatetraenoate + O2 = (12S)-hydroperoxy-(5Z,8Z,10E,14Z)-eicosatetraenoate. It carries out the reaction (9Z,12Z)-octadecadienoate + O2 = (13S)-hydroperoxy-(9Z,11E)-octadecadienoate. It catalyses the reaction (5Z,8Z,11Z,14Z)-eicosatetraenoate + O2 = (15S)-hydroperoxy-(5Z,8Z,11Z,13E)-eicosatetraenoate. The enzyme catalyses (5Z,8Z,11Z,14Z)-eicosatetraenoate + 2 O2 = (14R,15S)-dihydroperoxy-(5Z,8Z,10E,12E)-eicosatetraenoate. The catalysed reaction is (5Z,8Z,11Z,14Z)-eicosatetraenoate + 2 O2 = (8S,15S)-dihydroperoxy-(5Z,9E,11Z,13E)-eicosatetraenoate. It carries out the reaction (14S,15R)-epoxy-(5Z,8Z,11Z)-eicosatrienoate + O2 = (8S)-hydroperoxy-(14S,15R)-epoxy-(5Z,9E,11Z)-eicosatrienoate. It catalyses the reaction (14S,15R)-epoxy-(5Z,8Z,11Z)-eicosatrienoate + O2 = (12S)-hydroperoxy-(14S,15R)-epoxy-(5Z,8Z,10E)-eicosatrienoate. The enzyme catalyses (14R,15S)-epoxy-(5Z,8Z,11Z)-eicosatrienoate + O2 = (5S)-hydroperoxy-(14R,15S)-epoxy-(6E,8Z,11Z)-eicosatrienoate. The catalysed reaction is (14R,15S)-epoxy-(5Z,8Z,11Z)-eicosatrienoate + O2 = (12S)-hydroperoxy-(14R,15S)-epoxy-(5Z,8Z,10E)-eicosatrienoate. It carries out the reaction (15R)-hydroperoxy-(5Z,8Z,11Z,13E)-eicosatetraenoate = 15-oxo-(5Z,8Z,11Z,13E)-eicosatetraenoate + H2O. It catalyses the reaction (15S)-hydroperoxy-(5Z,8Z,11Z,13E)-eicosatetraenoate = (14S,15S)-epoxy-(5Z,8Z,10E,12E)-eicosatetraenoate + H2O. The enzyme catalyses (12S)-hydroperoxy-(5Z,8Z,10E,14Z)-eicosatetraenoate = (8S)-hydroxy-(11S,12S)-epoxy-(5Z,9E,14Z)-eicosatrienoate. The catalysed reaction is (4Z,7Z,10Z,13Z,16Z)-docosapentaenoate + O2 = 14-hydroperoxy-(4Z,7Z,10Z,12E,16Z)-docosapentaenoate. It carries out the reaction (7Z,10Z,13Z,16Z,19Z)-docosapentaenoate + O2 = 14-hydroperoxy-(7Z,10Z,12E,16Z,19Z)-docosapentaenoate. It catalyses the reaction (4Z,7Z,10Z,13Z,16Z,19Z)-docosahexaenoate + O2 = (14S)-hydroperoxy-(4Z,7Z,10Z,12E,16Z,19Z)-docosahexaenoate. The enzyme catalyses (4Z,7Z,10Z,13Z,16Z,19Z)-docosahexaenoate + O2 = (17S)-hydroperoxy-(4Z,7Z,10Z,13Z,15E,19Z)-docosahexaenoate. The catalysed reaction is (7S)-hydroperoxy-(4Z,8E,10Z,13Z,16Z,19Z)-docosahexaenoate + O2 = (7S,14S)-dihydroperoxy-(4Z,8E,10Z,12E,16Z,19Z)-docosahexaenoate. It carries out the reaction (7S)-hydroperoxy-(4Z,8E,10Z,13Z,16Z,19Z)-docosahexaenoate + O2 = (7S,17S)-dihydroperoxy-(4Z,8E,10Z,13Z,15E,19Z)-docosahexaenoate. It catalyses the reaction (4Z,7Z,10Z,13Z,16Z,19Z)-docosahexaenoate + O2 = (11S)-hydroperoxy-(4Z,7Z,9E,13Z,16Z,19Z)-docosahexaenoate. The enzyme catalyses N-(5Z,8Z,11Z,14Z)-eicosatetraenoyl-taurine + O2 = N-(12S)-hydroperoxy-(5Z,8Z,10E,14Z)-eicosatetraenoyl-taurine. The catalysed reaction is N-(5Z,8Z,11Z,14Z)-eicosatetraenoyl-gamma-aminobutanoate + O2 = N-(12S)-hydroperoxy-(5Z,8Z,10E,14Z)-eicosatetraenoyl-gamma-aminobutanoate. It carries out the reaction N-(5Z,8Z,11Z,14Z)-eicosatetraenoyl-glycine + O2 = N-(12S)-hydroperoxy-(5Z,8Z,10E,14Z)-eicosatetraenoyl-glycine. It catalyses the reaction N-(5Z,8Z,11Z,14Z)-eicosatetraenoyl-L-alanine + O2 = N-(12S)-hydroperoxy-(5Z,8Z,10E,14Z)-eicosatetraenoyl-alanine. The enzyme catalyses N-(5Z,8Z,11Z,14Z)-eicosatetraenoyl-taurine + O2 = N-(15S)-hydroperoxy-(5Z,8Z,11Z,13E)-eicosatetraenoyl-taurine. The catalysed reaction is N-(5Z,8Z,11Z,14Z)-eicosatetraenoyl-gamma-aminobutanoate + O2 = N-(15S)-hydroperoxy-(5Z,8Z,11Z,13E)-eicosatetraenoyl-gamma-aminobutanoate. It carries out the reaction N-(5Z,8Z,11Z,14Z)-eicosatetraenoyl-glycine + O2 = N-(15S)-hydroperoxy-(5Z,8Z,11Z,13E)-eicosatetraenoyl-glycine. It catalyses the reaction N-(5Z,8Z,11Z,14Z)-eicosatetraenoyl-L-alanine + O2 = N-(15S)-hydroperoxy-(5Z,8Z,11Z,13E)-eicosatetraenoyl-alanine. The protein operates within lipid metabolism; hydroperoxy eicosatetraenoic acid biosynthesis. Non-heme iron-containing dioxygenase that catalyzes the stereo-specific peroxidation of free and esterified polyunsaturated fatty acids generating a spectrum of bioactive lipid mediators. It inserts peroxyl groups at C12 or C15 of arachidonate ((5Z,8Z,11Z,14Z)-eicosatetraenoate) producing both 12-hydroperoxyeicosatetraenoate/12-HPETE and 15-hydroperoxyeicosatetraenoate/15-HPETE. It may then act on 12-HPETE to produce hepoxilins, which may show pro-inflammatory properties. Can also peroxidize linoleate ((9Z,12Z)-octadecadienoate) to 13-hydroperoxyoctadecadienoate. May participate in the sequential oxidations of DHA ((4Z,7Z,10Z,13Z,16Z,19Z)-docosahexaenoate) to generate specialized pro-resolving mediators (SPMs)like resolvin D5 ((7S,17S)-diHPDHA) and (7S,14S)-diHPDHA, that actively down-regulate the immune response and have anti-aggregation properties with platelets. Can convert epoxy fatty acids to hydroperoxy-epoxides derivatives followed by an intramolecular nucleophilic substitution leading to the formation of monocyclic endoperoxides. Plays an important role during the maintenance of self-tolerance by peroxidizing membrane-bound phosphatidylethanolamine which can then signal the sorting process for clearance of apoptotic cells during inflammation and prevent an autoimmune response. In addition to its role in the immune and inflammatory responses, this enzyme may play a role in epithelial wound healing in the cornea through production of lipoxin A4 (LXA(4)) and docosahexaenoic acid-derived neuroprotectin D1 (NPD1; 10R,17S-HDHA), both lipid autacoids exhibit anti-inflammatory and neuroprotective properties. Furthermore, it may regulate actin polymerization which is crucial for several biological processes such as the phagocytosis of apoptotic cells. It is also implicated in the generation of endogenous ligands for peroxisome proliferator activated receptor (PPAR-gamma), hence modulating macrophage development and function. It may also exert a negative effect on skeletal development by regulating bone mass through this pathway. As well as participates in ER stress and downstream inflammation in adipocytes, pancreatic islets, and liver. Finally, it is also involved in the cellular response to IL13/interleukin-13. In Pongo abelii (Sumatran orangutan), this protein is Polyunsaturated fatty acid lipoxygenase ALOX15.